A 188-amino-acid polypeptide reads, in one-letter code: dCTP deaminase (188 aa).

Residues 111–116 (KSTYAR), 135–137 (TLE), Q156, Y170, and Q180 contribute to the dCTP site. E137 acts as the Proton donor/acceptor in catalysis.

This sequence belongs to the dCTP deaminase family. In terms of assembly, homotrimer.

The catalysed reaction is dCTP + H2O + H(+) = dUTP + NH4(+). It functions in the pathway pyrimidine metabolism; dUMP biosynthesis; dUMP from dCTP (dUTP route): step 1/2. Catalyzes the deamination of dCTP to dUTP. The chain is dCTP deaminase from Pseudomonas fluorescens (strain Pf0-1).